Consider the following 521-residue polypeptide: Maturase K (521 aa).

It belongs to the intron maturase 2 family. MatK subfamily.

It localises to the plastid. Its subcellular location is the chloroplast. Functionally, usually encoded in the trnK tRNA gene intron. Probably assists in splicing its own and other chloroplast group II introns. This chain is Maturase K, found in Anthericum liliago (St-Bernard's lily).